The primary structure comprises 1845 residues: Collagen alpha-1(XXVII) chain (1845 aa).

The signal sequence occupies residues 1–39; that stretch reads MGTGFARGARGTAASGPGGGFLFAWILVSFTCHLASTQG. Residues 40-609 constitute a propeptide, N-terminal propeptide; sequence APEDVDVLQR…LGPTPFPMLM (570 aa). A Laminin G-like domain is found at 72-237; it reads PSGFIFTQRA…NYCAHLRERC (166 aa). The N-linked (GlcNAc...) asparagine glycan is linked to Asn-272. Disordered stretches follow at residues 299-478, 502-572, 608-774, and 827-1608; these read TKPL…VPKT, PPLG…RPST, LMGP…MGRP, and LMGG…HPIQ. Residues 312 to 323 show a composition bias toward polar residues; it reads HSSSQTPLSPAK. Composition is skewed to low complexity over residues 327–343 and 356–372; these read RKTP…NSTR and TTTS…SVSP. Residue Asn-340 is glycosylated (N-linked (GlcNAc...) asparagine). Residues 429–439 show a composition bias toward pro residues; sequence PRPPVPSPQPL. Residues 444–454 are compositionally biased toward polar residues; it reads GLSKKFTNPTV. Residues 554 to 564 are compositionally biased toward basic and acidic residues; sequence SARDASPRDLT. 11 consecutive Collagen-like domains span residues 610-664, 673-732, 742-801, 817-876, 877-936, 937-996, 997-1038, 1039-1096, 1117-1176, 1177-1236, and 1240-1299; these read GPPG…GDPG, GAKG…PGPV, GYIG…PGPP, GYPG…PGPL, GKAG…EGPM, GPPG…VGEK, GDRG…PGSR, GLPG…GAKG, GSQG…PGLE, GDHG…QGEK, and GAKG…NGHK. The triple-helical stretch occupies residues 610 to 1603; the sequence is GPPGSKGDCG…RGRPGPPGPP (994 aa). Positions 639 to 654 are enriched in pro residues; it reads RGPPGPYGNPGPPGPP. Composition is skewed to low complexity over residues 677–690 and 699–719; these read NMGL…PGPL and PGAA…SPGA. Over residues 865 to 874 the composition is skewed to gly residues; sequence GLPGGRGKPG. Residues 896–909 are compositionally biased toward low complexity; sequence FPGDIGPPGDNGPE. Residues 1018–1027 are compositionally biased toward gly residues; the sequence is GTPGGIGNPG. Composition is skewed to low complexity over residues 1074-1086, 1112-1122, and 1152-1167; these read RGRP…QGAA, LPGEPGSQGPQ, and KGDL…QGLI. Composition is skewed to basic and acidic residues over residues 1187 to 1212 and 1226 to 1238; these read LKGD…KGED and REGK…EKGQ. 2 stretches are compositionally biased toward basic and acidic residues: residues 1311-1323 and 1335-1345; these read KGEK…DGKT and PVGDRGDRGEP. Residues 1325 to 1384 enclose the Collagen-like 12 domain; it reads GPPGPPGDRGPVGDRGDRGEPGDPGYPGQEGVQGLRGEPGQQGQPGHPGPRGRPGPKGSK. 3 stretches are compositionally biased toward low complexity: residues 1360 to 1369, 1395 to 1422, and 1438 to 1465; these read RGEPGQQGQP, KAGP…RQGP, and PGYQ…PGVA. 3 Collagen-like domains span residues 1424–1483, 1484–1543, and 1544–1603; these read GTAG…SGLP, GQLG…KGIQ, and GPRG…PGPP. A compositionally biased stretch (low complexity) spans 1557–1572; the sequence is IIGPPGMLGPSGLPGP. The span at 1588–1605 shows a compositional bias: pro residues; sequence RGPPGPRGRPGPPGPPWH. Residues 1607 to 1845 constitute a propeptide, C-terminal propeptide; the sequence is IQFQQDDLGA…RLEVGPACFL (239 aa). In terms of domain architecture, Fibrillar collagen NC1 spans 1645-1845; sequence GEIFKTLHYL…RLEVGPACFL (201 aa). 3 disulfides stabilise this stretch: Cys-1675–Cys-1707, Cys-1716–Cys-1843, and Cys-1752–Cys-1796. 4 residues coordinate Ca(2+): Asp-1693, Asn-1695, Cys-1698, and Asp-1701. Residue Asn-1754 is glycosylated (N-linked (GlcNAc...) asparagine).

Belongs to the fibrillar collagen family. Highly expressed in cartilage, eye and ear.

Its subcellular location is the secreted. The protein localises to the extracellular space. It is found in the extracellular matrix. Its function is as follows. Plays a role during the calcification of cartilage and the transition of cartilage to bone. The chain is Collagen alpha-1(XXVII) chain (Col27a1) from Mus musculus (Mouse).